The chain runs to 239 residues: Ribosomal RNA large subunit methyltransferase E (239 aa).

The tract at residues 1-20 is disordered; sequence MTKAPIAGNRTGRKLGQRVK. A compositionally biased stretch (basic residues) spans 11-20; it reads TGRKLGQRVK. S-adenosyl-L-methionine is bound by residues G81, W83, D104, D120, and D144. K184 functions as the Proton acceptor in the catalytic mechanism.

This sequence belongs to the class I-like SAM-binding methyltransferase superfamily. RNA methyltransferase RlmE family.

It localises to the cytoplasm. The enzyme catalyses uridine(2552) in 23S rRNA + S-adenosyl-L-methionine = 2'-O-methyluridine(2552) in 23S rRNA + S-adenosyl-L-homocysteine + H(+). In terms of biological role, specifically methylates the uridine in position 2552 of 23S rRNA at the 2'-O position of the ribose in the fully assembled 50S ribosomal subunit. The chain is Ribosomal RNA large subunit methyltransferase E from Rhizobium etli (strain ATCC 51251 / DSM 11541 / JCM 21823 / NBRC 15573 / CFN 42).